The following is a 249-amino-acid chain: tRNA pseudouridine synthase A (249 aa).

Aspartate 53 serves as the catalytic Nucleophile. Tyrosine 111 contributes to the substrate binding site.

It belongs to the tRNA pseudouridine synthase TruA family. In terms of assembly, homodimer.

The enzyme catalyses uridine(38/39/40) in tRNA = pseudouridine(38/39/40) in tRNA. Formation of pseudouridine at positions 38, 39 and 40 in the anticodon stem and loop of transfer RNAs. This chain is tRNA pseudouridine synthase A, found in Streptococcus pneumoniae (strain Taiwan19F-14).